Consider the following 41-residue polypeptide: Photosystem I reaction center subunit IX (41 aa).

Residues 7–27 (YLSTAPVITAIWLGITAGILI) form a helical membrane-spanning segment.

The protein belongs to the PsaJ family.

It localises to the cellular thylakoid membrane. Functionally, may help in the organization of the PsaE and PsaF subunits. This chain is Photosystem I reaction center subunit IX, found in Cyanothece sp. (strain PCC 7425 / ATCC 29141).